Here is an 868-residue protein sequence, read N- to C-terminus: MAKKAELRRSCTFCRTRKIACSGERICNACRSRSIECVYDLEIAKGRPRLNKTTSTRASISAGPAGPSPITLEDGEPGDGGHSITSAVNPSITPLTGVMAELEVMFRENFGEDPMAAPSNQFQDRVARFNRNLAAGRASQGPSTPAGSLTYPGFLALLMQDLAETVTGKFGDLGCHPFFGPGERFYRACMLQDTTKTMFDTACLPSPSTSTPSGGEADILADYNSHLITQHLEVWMSNHPLSIIISKSLLLRDLRSQTANRVLLAVMLADAHHFADNSAKGDRLLQWAVSQLSNIPAGQEDLTTAQITLLLGWFHVCRGHSRRALCYVGYAGRITTKLASQLHESPLTGQTHINGIDRGAVEAEMIHHMYWVMLALTVWSFIQMDMPLADLLPAQLLQVLPARTTPDSTLLQLDRATDNLSTLKPQLSSLQSVWLLSHVTVLSAHLYALYPQHLRSPPEPQPWQDLMLHRLNRLLRQGRSLTQICSDSRNALLDIIVVLQKESAHGRGEPTLLALYLAVSIHLLFPRDETGHHVHNSQTFVLSDTLFQQLIASIQDLKQLFPAISSVARHDSSQPASTGSAGLHFYLLALDALGRALMYVLTVWDRVTAVEQRVWQDRLRGLLDGGLAMHDLFEYDALLQDHRWRSVKKHLKTACKGIKGVLSGSRDQGSRSSSSSVSSLDLSFALPSRPTPAMGIPTSEEGRSEMMFPTMPSASGIPSSISSSISHTSREVGLSWPGDGQILPTQEQGPRESSHPAASDLSDFDLAPFVSLGSIDSMQNGDERSRIMQQFSPNPMSLPSFWHDPQFSPAHHLVGTMPPPSLISLADLGMGERGQKRSSEKLGGLSEGDTPGTSADGGTKRRMKGMSN.

The segment at residues 11–37 is a DNA-binding region (zn(2)-C6 fungal-type); sequence CTFCRTRKIACSGERICNACRSRSIEC. 4 disordered regions span residues 51-88, 662-683, 715-761, and 829-868; these read NKTT…TSAV, LSGS…LDLS, SGIP…ASDL, and GMGE…GMSN. 2 stretches are compositionally biased toward low complexity: residues 663–683 and 715–727; these read SGSR…LDLS and SGIP…SISH.

It localises to the nucleus. In terms of biological role, transcription factor that regulates the expression of the gene cluster that mediates the biosynthesis of pyranonigrins, a family of antioxidative compounds. The chain is Transcription factor pynR from Aspergillus niger (strain ATCC MYA-4892 / CBS 513.88 / FGSC A1513).